The sequence spans 312 residues: uncharacterized protein (312 aa).

10 helical membrane-spanning segments follow: residues 13-33 (AAGT…SIWI), 45-65 (AVLL…FLIY), 81-101 (ACGA…IGLN), 105-125 (AMVE…FTAC), 133-153 (IQDL…LGGW), 162-182 (MIGA…LVLS), 198-218 (GMTA…AAGM), 229-249 (MYGL…VLML), 260-280 (AAAI…LFLG), and 283-303 (LGLI…GMEY). One can recognise an EamA domain in the interval 173–303 (AVYAGYLVLS…VFFVITGMEY (131 aa)).

This sequence belongs to the EamA transporter family.

It is found in the cell membrane. This is an uncharacterized protein from Bacillus subtilis (strain 168).